We begin with the raw amino-acid sequence, 126 residues long: Small ribosomal subunit protein uS12 (126 aa).

Position 89 is a 3-methylthioaspartic acid (Asp89).

The protein belongs to the universal ribosomal protein uS12 family. In terms of assembly, part of the 30S ribosomal subunit. Contacts proteins S8 and S17. May interact with IF1 in the 30S initiation complex.

Its function is as follows. With S4 and S5 plays an important role in translational accuracy. Interacts with and stabilizes bases of the 16S rRNA that are involved in tRNA selection in the A site and with the mRNA backbone. Located at the interface of the 30S and 50S subunits, it traverses the body of the 30S subunit contacting proteins on the other side and probably holding the rRNA structure together. The combined cluster of proteins S8, S12 and S17 appears to hold together the shoulder and platform of the 30S subunit. This is Small ribosomal subunit protein uS12 from Polynucleobacter asymbioticus (strain DSM 18221 / CIP 109841 / QLW-P1DMWA-1) (Polynucleobacter necessarius subsp. asymbioticus).